The sequence spans 487 residues: NADH-quinone oxidoreductase subunit N (487 aa).

Helical transmembrane passes span 8-28 (LIAMLPLLIVGLTVVVVMLSI), 35-55 (FINATLTVIGLNLALLSLYFV), 78-98 (GLVIIASLATSTFAYPWLVGY), 104-124 (EFYLLVLIAALGGILLTSANH), 125-145 (LASLFLGIELLTLPLFGLIGY), 159-179 (YMLLSAAASSFLLFGMALLYA), 203-223 (ILAGLGMMIVGLGFKLSLVPF), 235-255 (PAPVSTFLATASKIAIFAVVM), 271-291 (LVLSIIAVASILFGNLMAISQ), 297-317 (LLGYSSIAHLGYLLIALVAVQ), 328-348 (IGVYLAGYLFSSLGAFGVVSL), 376-396 (AVMTVMMLSLAGIPMTLGFIG), 409-428 (LWWLTGAVVLGSAIGLYYYL), and 451-471 (ALTAGGVVVLISAILVLVLGI).

This sequence belongs to the complex I subunit 2 family. In terms of assembly, NDH-1 is composed of 13 different subunits. Subunits NuoA, H, J, K, L, M, N constitute the membrane sector of the complex.

The protein resides in the cell inner membrane. The catalysed reaction is a quinone + NADH + 5 H(+)(in) = a quinol + NAD(+) + 4 H(+)(out). Its function is as follows. NDH-1 shuttles electrons from NADH, via FMN and iron-sulfur (Fe-S) centers, to quinones in the respiratory chain. The immediate electron acceptor for the enzyme in this species is believed to be ubiquinone. Couples the redox reaction to proton translocation (for every two electrons transferred, four hydrogen ions are translocated across the cytoplasmic membrane), and thus conserves the redox energy in a proton gradient. This Yersinia pestis bv. Antiqua (strain Angola) protein is NADH-quinone oxidoreductase subunit N.